The following is a 356-amino-acid chain: Non-functional pseudokinase ZRK15 (356 aa).

The Protein kinase domain maps to 62–356; it reads NRVSELFDEI…SSSSCGETSL (295 aa). ATP contacts are provided by residues 68 to 76 and Lys94; that span reads FDEIPYDWY.

This sequence belongs to the protein kinase superfamily. Ser/Thr protein kinase family. ZRK subfamily. As to quaternary structure, interacts with RPP13L4/ZAR1.

This chain is Non-functional pseudokinase ZRK15, found in Arabidopsis thaliana (Mouse-ear cress).